Consider the following 255-residue polypeptide: Uracil-DNA glycosylase (255 aa).

Asp93 serves as the catalytic Proton acceptor.

Belongs to the uracil-DNA glycosylase (UDG) superfamily. UNG family.

The protein localises to the host nucleus. The catalysed reaction is Hydrolyzes single-stranded DNA or mismatched double-stranded DNA and polynucleotides, releasing free uracil.. In terms of biological role, excises uracil residues from the DNA which can arise as a result of misincorporation of dUMP residues by DNA polymerase or deamination of cytosines. Therefore may reduce deleterious uracil incorporation into the viral genome, particularly in terminally differentiated cells which lack DNA repair enzymes. The sequence is that of Uracil-DNA glycosylase (U81) from Human herpesvirus 6A (strain Uganda-1102) (HHV-6 variant A).